Consider the following 458-residue polypeptide: Tetratricopeptide repeat protein 23-like (458 aa).

2 coiled-coil regions span residues glycine 175–glycine 198 and threonine 246–serine 278.

It is found in the cytoplasm. The protein resides in the cytoskeleton. It localises to the microtubule organizing center. The protein localises to the centrosome. Its subcellular location is the spindle. It is found in the midbody. This chain is Tetratricopeptide repeat protein 23-like (Ttc23l), found in Mus musculus (Mouse).